The primary structure comprises 295 residues: Ribosomal protein L11 methyltransferase (295 aa).

The S-adenosyl-L-methionine site is built by threonine 146, glycine 167, aspartate 189, and asparagine 231.

It belongs to the methyltransferase superfamily. PrmA family.

It is found in the cytoplasm. The catalysed reaction is L-lysyl-[protein] + 3 S-adenosyl-L-methionine = N(6),N(6),N(6)-trimethyl-L-lysyl-[protein] + 3 S-adenosyl-L-homocysteine + 3 H(+). Functionally, methylates ribosomal protein L11. The protein is Ribosomal protein L11 methyltransferase of Vibrio campbellii (strain ATCC BAA-1116).